We begin with the raw amino-acid sequence, 93 residues long: uncharacterized protein (93 aa).

The next 3 membrane-spanning stretches (helical) occupy residues 9 to 29 (ITVI…PQLI), 40 to 60 (ISLA…IYGI), and 66 to 86 (PIIV…YLKI).

Its subcellular location is the cell membrane. This is an uncharacterized protein from Methanocaldococcus jannaschii (strain ATCC 43067 / DSM 2661 / JAL-1 / JCM 10045 / NBRC 100440) (Methanococcus jannaschii).